Here is a 116-residue protein sequence, read N- to C-terminus: Small ribosomal subunit protein bS6 (116 aa).

The interval 94–116 is disordered; it reads ESITEPSPLTKPKEDRKGDSEAA. Basic and acidic residues predominate over residues 104-116; it reads KPKEDRKGDSEAA.

The protein belongs to the bacterial ribosomal protein bS6 family.

Binds together with bS18 to 16S ribosomal RNA. The sequence is that of Small ribosomal subunit protein bS6 from Idiomarina loihiensis (strain ATCC BAA-735 / DSM 15497 / L2-TR).